The primary structure comprises 118 residues: Aspartate 1-decarboxylase (118 aa).

Ser-25 acts as the Schiff-base intermediate with substrate; via pyruvic acid in catalysis. Ser-25 carries the post-translational modification Pyruvic acid (Ser). Thr-57 contacts substrate. The Proton donor role is filled by Tyr-58. Residue 73–75 (GAA) participates in substrate binding.

This sequence belongs to the PanD family. In terms of assembly, heterooctamer of four alpha and four beta subunits. It depends on pyruvate as a cofactor. Is synthesized initially as an inactive proenzyme, which is activated by self-cleavage at a specific serine bond to produce a beta-subunit with a hydroxyl group at its C-terminus and an alpha-subunit with a pyruvoyl group at its N-terminus.

It localises to the cytoplasm. It carries out the reaction L-aspartate + H(+) = beta-alanine + CO2. It functions in the pathway cofactor biosynthesis; (R)-pantothenate biosynthesis; beta-alanine from L-aspartate: step 1/1. Catalyzes the pyruvoyl-dependent decarboxylation of aspartate to produce beta-alanine. In Leptospira biflexa serovar Patoc (strain Patoc 1 / Ames), this protein is Aspartate 1-decarboxylase.